The sequence spans 284 residues: MSAQIISGNKLAQQIKTQIFEHIASYVQQGYRAPGLAVILVGSDPASQVYVGSKRKTCAELGIYSESYDLPADTTETQLLSLINKLNNDEKIDGILVQLPLPEHVDTTKIIEAISPDKDVDGFHPYNVGRLCQRIPTLRACTPYGVMKLLETTGENLYGKHAVIVGASNIVGRPMALELLLGGCTVTITHRFTKNLENHVRQADLLVVAVGQPNLIPGEWIKENAIVIDVGINRIGGKLVGDVEYEAASQKAKFITPVPGGVGPMTVAMLMQNTLLAYQRHINP.

NADP(+)-binding positions include 166–168 (GAS) and isoleucine 232.

Belongs to the tetrahydrofolate dehydrogenase/cyclohydrolase family. As to quaternary structure, homodimer.

It carries out the reaction (6R)-5,10-methylene-5,6,7,8-tetrahydrofolate + NADP(+) = (6R)-5,10-methenyltetrahydrofolate + NADPH. The catalysed reaction is (6R)-5,10-methenyltetrahydrofolate + H2O = (6R)-10-formyltetrahydrofolate + H(+). It functions in the pathway one-carbon metabolism; tetrahydrofolate interconversion. Functionally, catalyzes the oxidation of 5,10-methylenetetrahydrofolate to 5,10-methenyltetrahydrofolate and then the hydrolysis of 5,10-methenyltetrahydrofolate to 10-formyltetrahydrofolate. The chain is Bifunctional protein FolD from Glaesserella parasuis serovar 5 (strain SH0165) (Haemophilus parasuis).